Reading from the N-terminus, the 420-residue chain is 20-oxo-5-O-mycaminosyltylactone 23-monooxygenase (420 aa).

The segment at 1–28 (MSSSGDARPSQKGILLPAARANDTDEAA) is disordered. Residues H118, R122, R311, H367, and C369 each coordinate heme.

It belongs to the cytochrome P450 family.

It carries out the reaction 20-oxo-5-O-beta-D-mycaminosyltylonolide + 2 reduced [2Fe-2S]-[ferredoxin] + O2 + 2 H(+) = 5-O-beta-D-mycaminosyltylonolide + 2 oxidized [2Fe-2S]-[ferredoxin] + H2O. It participates in antibiotic biosynthesis; tylosin biosynthesis. Functionally, involved in the biosynthesis of the complex macrolide antibiotic tylosin. Catalyzes the hydroxylation of 20-oxo-5-O-beta-mycaminosyltylactone at the C-23 position to yield 5-O-beta-mycaminosyltylonolide. This chain is 20-oxo-5-O-mycaminosyltylactone 23-monooxygenase, found in Streptomyces fradiae (Streptomyces roseoflavus).